The primary structure comprises 313 residues: 4-hydroxy-3-methylbut-2-enyl diphosphate reductase (313 aa).

Residue cysteine 12 participates in [4Fe-4S] cluster binding. (2E)-4-hydroxy-3-methylbut-2-enyl diphosphate-binding residues include histidine 41 and histidine 74. Residues histidine 41 and histidine 74 each contribute to the dimethylallyl diphosphate site. Isopentenyl diphosphate contacts are provided by histidine 41 and histidine 74. Cysteine 96 provides a ligand contact to [4Fe-4S] cluster. Histidine 124 contributes to the (2E)-4-hydroxy-3-methylbut-2-enyl diphosphate binding site. Position 124 (histidine 124) interacts with dimethylallyl diphosphate. Histidine 124 serves as a coordination point for isopentenyl diphosphate. The Proton donor role is filled by glutamate 126. Threonine 164 contacts (2E)-4-hydroxy-3-methylbut-2-enyl diphosphate. Cysteine 194 is a binding site for [4Fe-4S] cluster. The (2E)-4-hydroxy-3-methylbut-2-enyl diphosphate site is built by serine 222, serine 223, asparagine 224, and serine 266. Dimethylallyl diphosphate-binding residues include serine 222, serine 223, asparagine 224, and serine 266. Residues serine 222, serine 223, asparagine 224, and serine 266 each contribute to the isopentenyl diphosphate site.

This sequence belongs to the IspH family. It depends on [4Fe-4S] cluster as a cofactor.

The enzyme catalyses isopentenyl diphosphate + 2 oxidized [2Fe-2S]-[ferredoxin] + H2O = (2E)-4-hydroxy-3-methylbut-2-enyl diphosphate + 2 reduced [2Fe-2S]-[ferredoxin] + 2 H(+). It catalyses the reaction dimethylallyl diphosphate + 2 oxidized [2Fe-2S]-[ferredoxin] + H2O = (2E)-4-hydroxy-3-methylbut-2-enyl diphosphate + 2 reduced [2Fe-2S]-[ferredoxin] + 2 H(+). Its pathway is isoprenoid biosynthesis; dimethylallyl diphosphate biosynthesis; dimethylallyl diphosphate from (2E)-4-hydroxy-3-methylbutenyl diphosphate: step 1/1. It participates in isoprenoid biosynthesis; isopentenyl diphosphate biosynthesis via DXP pathway; isopentenyl diphosphate from 1-deoxy-D-xylulose 5-phosphate: step 6/6. Functionally, catalyzes the conversion of 1-hydroxy-2-methyl-2-(E)-butenyl 4-diphosphate (HMBPP) into a mixture of isopentenyl diphosphate (IPP) and dimethylallyl diphosphate (DMAPP). Acts in the terminal step of the DOXP/MEP pathway for isoprenoid precursor biosynthesis. This chain is 4-hydroxy-3-methylbut-2-enyl diphosphate reductase, found in Protochlamydia amoebophila (strain UWE25).